The primary structure comprises 397 residues: MALTMSAKSVSARAQVSSKAQAAPAVAVSGRTSSRVMPAPALAARSSVARTPLVVCAATATAPSPSLADKFKPNAIARVPATQQKQTAIITGASSGLGLNAAKALAATGEWHVVMACRDFLKAEQAAKKVGMPAGSYSILHLDLSSLESVRQFVQNFKASGRRLDALVCNAAVYLPTAKEPRFTADGFELSVGTNHLGHFLLTNLLLDDLKNAPNKQPRCIIVGSITGNTNTLAGNVPPKANLGDLSGLAAGVPAANPMMDGQEFNGAKAYKDSKVACMMTVRQMHQRFHDATGITFASLYPGCIAETGLFREHVPLFKTLFPPFQKYITKGYVSEEEAGRRLAAVISDPKLNKSGAYWSWSSTTGSFDNQVSEEVADDSKASKLWDISAKLVGLSA.

The N-terminal 57 residues, 1–57 (MALTMSAKSVSARAQVSSKAQAAPAVAVSGRTSSRVMPAPALAARSSVARTPLVVCA), are a transit peptide targeting the chloroplast.

This sequence belongs to the short-chain dehydrogenases/reductases (SDR) family. POR subfamily.

The protein resides in the plastid. It is found in the chloroplast. It catalyses the reaction chlorophyllide a + NADP(+) = protochlorophyllide a + NADPH + H(+). The protein operates within porphyrin-containing compound metabolism; chlorophyll biosynthesis. In terms of biological role, phototransformation of protochlorophyllide (Pchlide) to chlorophyllide (Chlide). In Chlamydomonas reinhardtii (Chlamydomonas smithii), this protein is Protochlorophyllide reductase, chloroplastic (PORA).